The sequence spans 359 residues: Doublesex- and mab-3-related transcription factor B1 (359 aa).

A DNA-binding region (DM) is located at residues 7 to 54 (CSRCRNHGYLVPVKGHTGKCRWKQCICDKCYLITERQKIMAAQKVLRT). Disordered stretches follow at residues 111–149 (PPQAPSPGPSTFQLGPSGRPGPSTFQPGPGAPGGLRDRS) and 262–359 (SGLV…EQSN). Pro residues-rich tracts occupy residues 277-299 (CSPPPPPPPPPPPPLPAPPPQPQ) and 315-325 (LPPPPPPPSPP). Residues 348-359 (EPSQDSPQEQSN) are compositionally biased toward polar residues.

It belongs to the DMRT family. Brain.

It is found in the nucleus. The sequence is that of Doublesex- and mab-3-related transcription factor B1 (Dmrtb1) from Mus musculus (Mouse).